Reading from the N-terminus, the 92-residue chain is Small ribosomal subunit protein uS19 (92 aa).

Its function is as follows. Protein S19 forms a complex with S13 that binds strongly to the 16S ribosomal RNA. The chain is Small ribosomal subunit protein uS19 from Rhodopseudomonas palustris (strain ATCC BAA-98 / CGA009).